The chain runs to 335 residues: Aliphatic sulfonates import ATP-binding protein SsuB (335 aa).

Residues 48–71 (PFASGGAFGRAPRDDDDDRRGAGD) are disordered. The region spanning 74 to 293 (VRLTRVSKRY…ARASAAFAEL (220 aa)) is the ABC transporter domain. Position 106–113 (106–113 (GRSGCGKS)) interacts with ATP.

This sequence belongs to the ABC transporter superfamily. Aliphatic sulfonates importer (TC 3.A.1.17.2) family. The complex is composed of two ATP-binding proteins (SsuB), two transmembrane proteins (SsuC) and a solute-binding protein (SsuA).

The protein localises to the cell inner membrane. It catalyses the reaction ATP + H2O + aliphatic sulfonate-[sulfonate-binding protein]Side 1 = ADP + phosphate + aliphatic sulfonateSide 2 + [sulfonate-binding protein]Side 1.. Its function is as follows. Part of the ABC transporter complex SsuABC involved in aliphatic sulfonates import. Responsible for energy coupling to the transport system. In Burkholderia thailandensis (strain ATCC 700388 / DSM 13276 / CCUG 48851 / CIP 106301 / E264), this protein is Aliphatic sulfonates import ATP-binding protein SsuB.